Consider the following 282-residue polypeptide: Phosphatidylserine decarboxylase proenzyme (282 aa).

Catalysis depends on charge relay system; for autoendoproteolytic cleavage activity residues D88, H144, and S247. S247 (schiff-base intermediate with substrate; via pyruvic acid; for decarboxylase activity) is an active-site residue. Position 247 is a pyruvic acid (Ser); by autocatalysis (S247).

The protein belongs to the phosphatidylserine decarboxylase family. PSD-B subfamily. Prokaryotic type I sub-subfamily. In terms of assembly, heterodimer of a large membrane-associated beta subunit and a small pyruvoyl-containing alpha subunit. The cofactor is pyruvate. In terms of processing, is synthesized initially as an inactive proenzyme. Formation of the active enzyme involves a self-maturation process in which the active site pyruvoyl group is generated from an internal serine residue via an autocatalytic post-translational modification. Two non-identical subunits are generated from the proenzyme in this reaction, and the pyruvate is formed at the N-terminus of the alpha chain, which is derived from the carboxyl end of the proenzyme. The autoendoproteolytic cleavage occurs by a canonical serine protease mechanism, in which the side chain hydroxyl group of the serine supplies its oxygen atom to form the C-terminus of the beta chain, while the remainder of the serine residue undergoes an oxidative deamination to produce ammonia and the pyruvoyl prosthetic group on the alpha chain. During this reaction, the Ser that is part of the protease active site of the proenzyme becomes the pyruvoyl prosthetic group, which constitutes an essential element of the active site of the mature decarboxylase.

It is found in the cell membrane. The catalysed reaction is a 1,2-diacyl-sn-glycero-3-phospho-L-serine + H(+) = a 1,2-diacyl-sn-glycero-3-phosphoethanolamine + CO2. The protein operates within phospholipid metabolism; phosphatidylethanolamine biosynthesis; phosphatidylethanolamine from CDP-diacylglycerol: step 2/2. Catalyzes the formation of phosphatidylethanolamine (PtdEtn) from phosphatidylserine (PtdSer). In Xanthomonas oryzae pv. oryzae (strain KACC10331 / KXO85), this protein is Phosphatidylserine decarboxylase proenzyme.